The following is a 198-amino-acid chain: N-acetyltransferase 9-like protein (198 aa).

One can recognise an N-acetyltransferase domain in the interval 14 to 186 (IILVPYKEKH…SNNFTNLTAD (173 aa)).

The protein belongs to the acetyltransferase family. GNAT subfamily.

The chain is N-acetyltransferase 9-like protein (nat9) from Nematostella vectensis (Starlet sea anemone).